We begin with the raw amino-acid sequence, 365 residues long: Alanine racemase (365 aa).

Lysine 36 serves as the catalytic Proton acceptor; specific for D-alanine. Lysine 36 carries the post-translational modification N6-(pyridoxal phosphate)lysine. Arginine 132 serves as a coordination point for substrate. The active-site Proton acceptor; specific for L-alanine is tyrosine 257. Residue methionine 305 coordinates substrate.

Belongs to the alanine racemase family. Pyridoxal 5'-phosphate serves as cofactor.

It catalyses the reaction L-alanine = D-alanine. The protein operates within amino-acid biosynthesis; D-alanine biosynthesis; D-alanine from L-alanine: step 1/1. In terms of biological role, catalyzes the interconversion of L-alanine and D-alanine. May also act on other amino acids. The protein is Alanine racemase (alr) of Xylella fastidiosa (strain Temecula1 / ATCC 700964).